Reading from the N-terminus, the 496-residue chain is NADP-dependent glyceraldehyde-3-phosphate dehydrogenase (496 aa).

Substrate is bound by residues arginine 116 and 169–170 (NY). Positions 192, 195, and 230 each coordinate NADP(+). 245-249 (GGDTG) contacts NAD(+). Glutamate 264 serves as the catalytic Proton acceptor. Position 297 to 299 (297 to 299 (RCT)) interacts with substrate. Cysteine 298 functions as the Nucleophile in the catalytic mechanism. Glutamate 391 contacts NADP(+). Substrate is bound at residue arginine 451.

It belongs to the aldehyde dehydrogenase family.

It is found in the cytoplasm. The catalysed reaction is D-glyceraldehyde 3-phosphate + NADP(+) + H2O = (2R)-3-phosphoglycerate + NADPH + 2 H(+). Important as a means of generating NADPH for biosynthetic reactions. The chain is NADP-dependent glyceraldehyde-3-phosphate dehydrogenase (GAPN) from Nicotiana plumbaginifolia (Leadwort-leaved tobacco).